The chain runs to 306 residues: Ectoine dioxygenase (306 aa).

Glutamine 127 is an L-ectoine binding site. Lysine 133 contacts 2-oxoglutarate. Histidine 144, aspartate 146, and histidine 245 together coordinate Fe cation.

Belongs to the PhyH family. EctD subfamily. Homodimer. It depends on Fe(2+) as a cofactor.

The catalysed reaction is L-ectoine + 2-oxoglutarate + O2 = 5-hydroxyectoine + succinate + CO2. In terms of biological role, involved in the biosynthesis of 5-hydroxyectoine, called compatible solute, which helps organisms to survive extreme osmotic stress by acting as a highly soluble organic osmolyte. Catalyzes the 2-oxoglutarate-dependent selective hydroxylation of L-ectoine to yield (4S,5S)-5-hydroxyectoine. The polypeptide is Ectoine dioxygenase (Sphingopyxis alaskensis (strain DSM 13593 / LMG 18877 / RB2256) (Sphingomonas alaskensis)).